The chain runs to 558 residues: Sinalpyl alcohol oxidase Nec3 (558 aa).

The first 28 residues, 1-28, serve as a signal peptide directing secretion; the sequence is MATMAILQRTFSFILIFSIALHLKSLFA. Residue 64–65 participates in FAD binding; that stretch reads TA. N-linked (GlcNAc...) asparagine glycosylation is present at Asn-76. Residues 83–84, Val-131, Ser-135, and 139–142 each bind FAD; these read ER and NFGF. N-linked (GlcNAc...) asparagine glycosylation occurs at Asn-180. Val-247 is a binding site for FAD. N-linked (GlcNAc...) asparagine glycans are attached at residues Asn-308, Asn-386, and Asn-473. Cys-433 and Cys-484 are disulfide-bonded. FAD is bound at residue 492 to 493; the sequence is YH. His-493 (proton donor) is an active-site residue. The active-site Proton acceptor is the Asn-531. 532–533 contacts FAD; it reads PQ.

The protein belongs to the GMC oxidoreductase family. In terms of assembly, monomer. FAD serves as cofactor. As to expression, confined to nectaries.

The enzyme catalyses (E)-sinapyl alcohol + O2 = (E)-sinapaldehyde + H2O2. Its pathway is alkaloid biosynthesis. Involved in the production of blood-red nectar containing the alkaloid nesocodin and that serves as a visual attractant for pollinator visitation, including vertebrates such as Phelsuma geckos. The nectar is initially acidic and pale yellow, but slowly becomes alkaline before turning into red within 24 hours. Together with NEC1 and NEC2, facilitates the condensation of sinapaldehyde ((E)-3,5-dimethoxy-4-hydroxycinnamaldehyde) and proline to form nesocodin, a pigment with a stable imine bond. Catalyzes the conversion of sinapyl alcohol to sinapaldehyde. This is Sinalpyl alcohol oxidase Nec3 from Nesocodon mauritianus (Blue Mauritius bellflower).